The primary structure comprises 81 residues: Putative defensin-like protein 25 (81 aa).

The signal sequence occupies residues 1–23 (MASLKVFSFALILVLTFSVDVEG). 4 cysteine pairs are disulfide-bonded: C33–C81, C43–C68, C52–C77, and C56–C79.

This sequence belongs to the DEFL family.

It is found in the secreted. In Arabidopsis thaliana (Mouse-ear cress), this protein is Putative defensin-like protein 25.